A 601-amino-acid chain; its full sequence is Bifunctional protein GlmU (601 aa).

The segment at 1-375 (MKSDLAIVIL…SELLLGVNNR (375 aa)) is pyrophosphorylase. UDP-N-acetyl-alpha-D-glucosamine contacts are provided by residues 10-13 (LAAG), Lys-24, Gln-75, and 81-82 (GT). Asp-165 contacts Mg(2+). Gly-201, Glu-216, Asn-230, and Asn-373 together coordinate UDP-N-acetyl-alpha-D-glucosamine. Residue Asn-373 coordinates Mg(2+). The segment at 376-396 (VQLAKTEKILNDQIIKRWQLY) is linker. The interval 397 to 601 (GVTIKSPETT…PKWAENRGDG (205 aa)) is N-acetyltransferase. The UDP-N-acetyl-alpha-D-glucosamine site is built by Arg-478 and Lys-496. His-508 functions as the Proton acceptor in the catalytic mechanism. UDP-N-acetyl-alpha-D-glucosamine is bound by residues Tyr-511 and Asn-522. Residues Ala-525, 531–532 (NY), and Ala-568 contribute to the acetyl-CoA site.

This sequence in the N-terminal section; belongs to the N-acetylglucosamine-1-phosphate uridyltransferase family. In the C-terminal section; belongs to the transferase hexapeptide repeat family. In terms of assembly, homotrimer. Mg(2+) is required as a cofactor.

It localises to the cytoplasm. It catalyses the reaction alpha-D-glucosamine 1-phosphate + acetyl-CoA = N-acetyl-alpha-D-glucosamine 1-phosphate + CoA + H(+). The enzyme catalyses N-acetyl-alpha-D-glucosamine 1-phosphate + UTP + H(+) = UDP-N-acetyl-alpha-D-glucosamine + diphosphate. It functions in the pathway nucleotide-sugar biosynthesis; UDP-N-acetyl-alpha-D-glucosamine biosynthesis; N-acetyl-alpha-D-glucosamine 1-phosphate from alpha-D-glucosamine 6-phosphate (route II): step 2/2. Its pathway is nucleotide-sugar biosynthesis; UDP-N-acetyl-alpha-D-glucosamine biosynthesis; UDP-N-acetyl-alpha-D-glucosamine from N-acetyl-alpha-D-glucosamine 1-phosphate: step 1/1. The protein operates within bacterial outer membrane biogenesis; LPS lipid A biosynthesis. Functionally, catalyzes the last two sequential reactions in the de novo biosynthetic pathway for UDP-N-acetylglucosamine (UDP-GlcNAc). The C-terminal domain catalyzes the transfer of acetyl group from acetyl coenzyme A to glucosamine-1-phosphate (GlcN-1-P) to produce N-acetylglucosamine-1-phosphate (GlcNAc-1-P), which is converted into UDP-GlcNAc by the transfer of uridine 5-monophosphate (from uridine 5-triphosphate), a reaction catalyzed by the N-terminal domain. The sequence is that of Bifunctional protein GlmU from Tropheryma whipplei (strain TW08/27) (Whipple's bacillus).